A 409-amino-acid chain; its full sequence is Protein naked cuticle homolog 2 (409 aa).

The N-myristoyl glycine moiety is linked to residue glycine 2. Positions 109–144 (AEDNRQEWVFTLYDFDNSGKVTKEDMSSLMHTIYDV) constitute an EF-hand domain. Residues aspartate 122, aspartate 124, serine 126, lysine 128, and aspartate 133 each contribute to the Ca(2+) site. Disordered stretches follow at residues 160 to 224 (LRVK…YCVD), 243 to 315 (TSRF…RYPG), 346 to 366 (SHTH…RIRS), and 388 to 409 (RHEH…YHQT). Basic and acidic residues-rich tracts occupy residues 171 to 185 (AARR…RETS) and 193 to 224 (VRSE…YCVD). The segment covering 247-268 (DSSSPDADQDPPSRSSHSQSRP) has biased composition (low complexity). Residues 389-409 (HEHHHHHEHHHHHHYHHYHQT) are compositionally biased toward basic residues.

It belongs to the NKD family. In terms of tissue distribution, expressed ubiquitously until 1 dpf, when expression becomes confined to the anterior CNS, with slight expression in the developing tail.

It localises to the cell membrane. The protein resides in the cytoplasm. Functionally, cell autonomous antagonist of both the canonical and non-canonical Wnt signaling pathways. The chain is Protein naked cuticle homolog 2 (nkd2) from Danio rerio (Zebrafish).